Consider the following 155-residue polypeptide: SsrA-binding protein (155 aa).

It belongs to the SmpB family.

The protein localises to the cytoplasm. Required for rescue of stalled ribosomes mediated by trans-translation. Binds to transfer-messenger RNA (tmRNA), required for stable association of tmRNA with ribosomes. tmRNA and SmpB together mimic tRNA shape, replacing the anticodon stem-loop with SmpB. tmRNA is encoded by the ssrA gene; the 2 termini fold to resemble tRNA(Ala) and it encodes a 'tag peptide', a short internal open reading frame. During trans-translation Ala-aminoacylated tmRNA acts like a tRNA, entering the A-site of stalled ribosomes, displacing the stalled mRNA. The ribosome then switches to translate the ORF on the tmRNA; the nascent peptide is terminated with the 'tag peptide' encoded by the tmRNA and targeted for degradation. The ribosome is freed to recommence translation, which seems to be the essential function of trans-translation. This chain is SsrA-binding protein, found in Bacillus cereus (strain B4264).